A 248-amino-acid polypeptide reads, in one-letter code: Ribosomal RNA small subunit methyltransferase J (248 aa).

Residues Arg-98–Asp-99, Glu-114–Arg-115, Ser-150–Ser-151, and Asp-168 contribute to the S-adenosyl-L-methionine site.

It belongs to the methyltransferase superfamily. RsmJ family.

Its subcellular location is the cytoplasm. The catalysed reaction is guanosine(1516) in 16S rRNA + S-adenosyl-L-methionine = N(2)-methylguanosine(1516) in 16S rRNA + S-adenosyl-L-homocysteine + H(+). In terms of biological role, specifically methylates the guanosine in position 1516 of 16S rRNA. The polypeptide is Ribosomal RNA small subunit methyltransferase J (Shewanella amazonensis (strain ATCC BAA-1098 / SB2B)).